A 209-amino-acid polypeptide reads, in one-letter code: Probable GTP-binding protein EngB (209 aa).

In terms of domain architecture, EngB-type G spans 22–198 (TPLEIAFVGR…NRTVGSWFDA (177 aa)). Residues Ser37 and Thr59 each contribute to the Mg(2+) site.

This sequence belongs to the TRAFAC class TrmE-Era-EngA-EngB-Septin-like GTPase superfamily. EngB GTPase family. Mg(2+) is required as a cofactor.

In terms of biological role, necessary for normal cell division and for the maintenance of normal septation. This Neisseria gonorrhoeae (strain ATCC 700825 / FA 1090) protein is Probable GTP-binding protein EngB.